The primary structure comprises 462 residues: Fumarate hydratase class II (462 aa).

Residues 97–99 (SGT), 128–131 (HPND), 138–140 (STN), and Thr186 contribute to the substrate site. Residue His187 is the Proton donor/acceptor of the active site. Ser317 is a catalytic residue. Substrate is bound by residues Ser318 and 323 to 325 (KVN).

The protein belongs to the class-II fumarase/aspartase family. Fumarase subfamily. In terms of assembly, homotetramer.

Its subcellular location is the cytoplasm. The enzyme catalyses (S)-malate = fumarate + H2O. It functions in the pathway carbohydrate metabolism; tricarboxylic acid cycle; (S)-malate from fumarate: step 1/1. Its function is as follows. Involved in the TCA cycle. Catalyzes the stereospecific interconversion of fumarate to L-malate. The protein is Fumarate hydratase class II of Neisseria meningitidis serogroup A / serotype 4A (strain DSM 15465 / Z2491).